The following is an 886-amino-acid chain: Alanine--tRNA ligase (886 aa).

Zn(2+) contacts are provided by histidine 564, histidine 568, cysteine 676, and histidine 680.

Belongs to the class-II aminoacyl-tRNA synthetase family. It depends on Zn(2+) as a cofactor.

Its subcellular location is the cytoplasm. It carries out the reaction tRNA(Ala) + L-alanine + ATP = L-alanyl-tRNA(Ala) + AMP + diphosphate. Catalyzes the attachment of alanine to tRNA(Ala) in a two-step reaction: alanine is first activated by ATP to form Ala-AMP and then transferred to the acceptor end of tRNA(Ala). Also edits incorrectly charged Ser-tRNA(Ala) and Gly-tRNA(Ala) via its editing domain. The sequence is that of Alanine--tRNA ligase from Bartonella bacilliformis (strain ATCC 35685 / KC583 / Herrer 020/F12,63).